The primary structure comprises 182 residues: Allergen Bla g 4 (182 aa).

A signal peptide spans 1–12 (AVLALCATDTLA). N72 carries N-linked (GlcNAc...) asparagine glycosylation.

Belongs to the calycin superfamily. Triabin family.

Its subcellular location is the secreted. Probable ligand-binding protein. This chain is Allergen Bla g 4, found in Blattella germanica (German cockroach).